A 653-amino-acid chain; its full sequence is Macrolide export ATP-binding/permease protein MacB (653 aa).

Positions 6–244 constitute an ABC transporter domain; it reads LQLTRVTRRF…DAAPDASGGA (239 aa). 42–49 is an ATP binding site; sequence GASGSGKS. 4 helical membrane-spanning segments follow: residues 278–298, 526–546, 587–607, and 616–636; these read LLTMLGIIIGITSVVSIVAIG, LTLLLSLIAVISLVVGGIGVM, MGGAIGIVLSFGMSFVFSLFV, and AASIASAFLCSTLIGVVFGFM.

Belongs to the ABC transporter superfamily. Macrolide exporter (TC 3.A.1.122) family. As to quaternary structure, homodimer.

The protein localises to the cell inner membrane. In terms of biological role, non-canonical ABC transporter that contains transmembrane domains (TMD), which form a pore in the inner membrane, and an ATP-binding domain (NBD), which is responsible for energy generation. Confers resistance against macrolides. This chain is Macrolide export ATP-binding/permease protein MacB, found in Burkholderia pseudomallei (strain 1710b).